The sequence spans 101 residues: Small ribosomal subunit protein uS14A (101 aa).

Disordered stretches follow at residues 1–20 (MAKK…VARY) and 28–72 (TEII…RPRG). 2 stretches are compositionally biased toward basic and acidic residues: residues 38-53 (EAER…RQPR) and 61-70 (RNRDSVDGRP).

The protein belongs to the universal ribosomal protein uS14 family. In terms of assembly, part of the 30S ribosomal subunit. Contacts proteins S3 and S10.

Binds 16S rRNA, required for the assembly of 30S particles and may also be responsible for determining the conformation of the 16S rRNA at the A site. The chain is Small ribosomal subunit protein uS14A from Streptomyces avermitilis (strain ATCC 31267 / DSM 46492 / JCM 5070 / NBRC 14893 / NCIMB 12804 / NRRL 8165 / MA-4680).